A 393-amino-acid polypeptide reads, in one-letter code: MSVKAPITQDVVTIPRKLPEGRINLVGLTRDRMREVLIDHGTPEKQAKMRVGQIWQWIYQWGVRDFEAMTNLAKAYRAQLAEHFTIEIPEVITRLVSEDGTRKYLVRIAGGHEVEVVYIPEEDRGTLCISSQVGCTLTCSFCHTGTQKLVRNLTAAEIVGQVMMARDDLGEWPVPGAPKDETRLLSNIVLMGMGEPLYNFDNVRDAMKIAMDPEGIQLSRRRITLSTSGVVPEIARTAEEIGCLLAISFHATTDEVRDVLVPINKRWNIEELLSALAAYPKVSNSERITFEYVMLDGVNDSDADAHRLLDHIRRYKIPAKINLIPFNEWPGAPYKRSSNNRIRAFANIIYQAGYAAPIRKTRGDDIMAACGQLKSATERARKSKKQIEAETGL.

Glutamate 115 serves as the catalytic Proton acceptor. In terms of domain architecture, Radical SAM core spans 121 to 365; the sequence is EEDRGTLCIS…APIRKTRGDD (245 aa). A disulfide bond links cysteine 128 and cysteine 370. The [4Fe-4S] cluster site is built by cysteine 135, cysteine 139, and cysteine 142. S-adenosyl-L-methionine is bound by residues 194–195, serine 226, 248–250, and asparagine 327; these read GE and SFH. Catalysis depends on cysteine 370, which acts as the S-methylcysteine intermediate.

It belongs to the radical SAM superfamily. RlmN family. Requires [4Fe-4S] cluster as cofactor.

The protein resides in the cytoplasm. The enzyme catalyses adenosine(2503) in 23S rRNA + 2 reduced [2Fe-2S]-[ferredoxin] + 2 S-adenosyl-L-methionine = 2-methyladenosine(2503) in 23S rRNA + 5'-deoxyadenosine + L-methionine + 2 oxidized [2Fe-2S]-[ferredoxin] + S-adenosyl-L-homocysteine. It carries out the reaction adenosine(37) in tRNA + 2 reduced [2Fe-2S]-[ferredoxin] + 2 S-adenosyl-L-methionine = 2-methyladenosine(37) in tRNA + 5'-deoxyadenosine + L-methionine + 2 oxidized [2Fe-2S]-[ferredoxin] + S-adenosyl-L-homocysteine. Functionally, specifically methylates position 2 of adenine 2503 in 23S rRNA and position 2 of adenine 37 in tRNAs. m2A2503 modification seems to play a crucial role in the proofreading step occurring at the peptidyl transferase center and thus would serve to optimize ribosomal fidelity. In Ruegeria pomeroyi (strain ATCC 700808 / DSM 15171 / DSS-3) (Silicibacter pomeroyi), this protein is Dual-specificity RNA methyltransferase RlmN.